We begin with the raw amino-acid sequence, 131 residues long: Phosphoribosyl-AMP cyclohydrolase (131 aa).

Asp-82 contributes to the Mg(2+) binding site. Residue Cys-83 coordinates Zn(2+). Asp-84 and Asp-86 together coordinate Mg(2+). The Zn(2+) site is built by Cys-99 and Cys-106.

This sequence belongs to the PRA-CH family. Homodimer. It depends on Mg(2+) as a cofactor. Zn(2+) is required as a cofactor.

The protein resides in the cytoplasm. The catalysed reaction is 1-(5-phospho-beta-D-ribosyl)-5'-AMP + H2O = 1-(5-phospho-beta-D-ribosyl)-5-[(5-phospho-beta-D-ribosylamino)methylideneamino]imidazole-4-carboxamide. The protein operates within amino-acid biosynthesis; L-histidine biosynthesis; L-histidine from 5-phospho-alpha-D-ribose 1-diphosphate: step 3/9. In terms of biological role, catalyzes the hydrolysis of the adenine ring of phosphoribosyl-AMP. The polypeptide is Phosphoribosyl-AMP cyclohydrolase (Methanospirillum hungatei JF-1 (strain ATCC 27890 / DSM 864 / NBRC 100397 / JF-1)).